We begin with the raw amino-acid sequence, 459 residues long: Cysteine--tRNA ligase (459 aa).

C29 provides a ligand contact to Zn(2+). Residues 31–41 carry the 'HIGH' region motif; the sequence is PTVYDRAHIGN. Zn(2+)-binding residues include C209, H234, and E238. Positions 266 to 270 match the 'KMSKS' region motif; sequence KMSKS. Residue K269 coordinates ATP.

This sequence belongs to the class-I aminoacyl-tRNA synthetase family. Monomer. Zn(2+) serves as cofactor.

Its subcellular location is the cytoplasm. It catalyses the reaction tRNA(Cys) + L-cysteine + ATP = L-cysteinyl-tRNA(Cys) + AMP + diphosphate. The polypeptide is Cysteine--tRNA ligase (Paramagnetospirillum magneticum (strain ATCC 700264 / AMB-1) (Magnetospirillum magneticum)).